Consider the following 822-residue polypeptide: Coiled-coil domain-containing protein 175 (822 aa).

Coiled-coil stretches lie at residues 129–164 (IIEI…EVLG), 223–397 (IEKQ…KQMM), and 510–537 (HLIE…IEEL).

This Mus musculus (Mouse) protein is Coiled-coil domain-containing protein 175 (Ccdc175).